Here is a 141-residue protein sequence, read N- to C-terminus: Hemoglobin subunit alpha-A (141 aa).

Residues 1–141 form the Globin domain; it reads VLSAADKTNV…VGTVLTAKYR (141 aa). Residue histidine 58 coordinates O2. Histidine 87 contacts heme b.

Belongs to the globin family. Heterotetramer of two alpha chains and two beta chains. Red blood cells.

Functionally, involved in oxygen transport from the lung to the various peripheral tissues. In Branta canadensis (Canada goose), this protein is Hemoglobin subunit alpha-A (HBAA).